The chain runs to 466 residues: Asparagine--tRNA ligase (466 aa).

The protein belongs to the class-II aminoacyl-tRNA synthetase family. Homodimer.

The protein localises to the cytoplasm. The catalysed reaction is tRNA(Asn) + L-asparagine + ATP = L-asparaginyl-tRNA(Asn) + AMP + diphosphate + H(+). The sequence is that of Asparagine--tRNA ligase from Buchnera aphidicola subsp. Schizaphis graminum (strain Sg).